Here is an 804-residue protein sequence, read N- to C-terminus: E3 UFM1-protein ligase 1 homolog (804 aa).

The residue at position 1 (Met-1) is an N-acetylmethionine. Positions 397–483 are disordered; sequence IHPSSKSSES…VKAQESNNII (87 aa). The span at 400–409 shows a compositional bias: low complexity; that stretch reads SSKSSESTES. Over residues 463–475 the composition is skewed to basic and acidic residues; the sequence is LDSKAGGKKESVK.

It belongs to the UFL1 family.

Functionally, E3 UFM1-protein ligase that mediates ufmylation of target proteins. The polypeptide is E3 UFM1-protein ligase 1 homolog (Arabidopsis thaliana (Mouse-ear cress)).